A 192-amino-acid chain; its full sequence is Probable apo-citrate lyase phosphoribosyl-dephospho-CoA transferase (192 aa).

This sequence belongs to the CitX family.

It catalyses the reaction apo-[citrate lyase ACP] + 2'-(5''-triphospho-alpha-D-ribosyl)-3'-dephospho-CoA = holo-[citrate lyase ACP] + diphosphate. Functionally, transfers 2-(5''-triphosphoribosyl)-3'-dephosphocoenzyme-A on a serine residue to the apo-acyl carrier protein (gamma chain) of the citrate lyase to yield holo-acyl carrier protein. The protein is Probable apo-citrate lyase phosphoribosyl-dephospho-CoA transferase of Streptococcus pyogenes serotype M18 (strain MGAS8232).